Consider the following 560-residue polypeptide: Nucleoprotein (560 aa).

The interval 54-236 is binding site for the cap structure m7GTP; it reads LRKAKRSDAD…ITRDESAVNI (183 aa). A compositionally biased stretch (polar residues) spans 323 to 332; sequence GRSWDNTSVD. The segment at 323–349 is disordered; sequence GRSWDNTSVDLNPKPDPGPRAPEKNGQ. Mn(2+) is bound by residues aspartate 380 and glutamate 382. Residues glutamate 390, cysteine 497, histidine 500, and cysteine 521 each coordinate Zn(2+). Aspartate 525 serves as a coordination point for Mn(2+).

Belongs to the arenaviridae nucleocapsid protein family. As to quaternary structure, homomultimerizes to form the nucleocapsid. Binds to viral genomic RNA. Interacts with glycoprotein G2. Interacts with protein Z; this interaction probably directs the encapsidated genome to budding sites. Interacts with protein L; this interaction does not interfere with Z-L interaction. Interacts with host IKBKE (via Protein kinase domain); the interaction inhibits IKBKE kinase activity.

It localises to the virion. The protein resides in the host cytoplasm. In terms of biological role, encapsidates the genome, protecting it from nucleases. The encapsidated genomic RNA is termed the nucleocapsid (NC). Serves as template for viral transcription and replication. The increased presence of protein N in host cell does not seem to trigger the switch from transcription to replication as observed in other negative strain RNA viruses. Through the interaction with host IKBKE, strongly inhibits the phosphorylation and nuclear translocation of host IRF3, a protein involved in interferon activation pathway, leading to the inhibition of interferon-beta and IRF3-dependent promoters activation. Also encodes a functional 3'-5' exoribonuclease that degrades preferentially dsRNA substrates and thereby participates in the suppression of interferon induction. This is Nucleoprotein from Cupixi mammarenavirus (isolate Rat/Brasil/BeAn 119303/1970) (CPXV).